A 283-amino-acid polypeptide reads, in one-letter code: Thymidylate synthase (283 aa).

Position 22 (R22) interacts with dUMP. The Nucleophile role is filled by C160. DUMP contacts are provided by residues 180–183 (RSCD), N191, and 221–223 (HIY). Residue D183 participates in (6R)-5,10-methylene-5,6,7,8-tetrahydrofolate binding. (6R)-5,10-methylene-5,6,7,8-tetrahydrofolate is bound at residue S282.

It belongs to the thymidylate synthase family. Bacterial-type ThyA subfamily. In terms of assembly, homodimer.

It is found in the cytoplasm. It carries out the reaction dUMP + (6R)-5,10-methylene-5,6,7,8-tetrahydrofolate = 7,8-dihydrofolate + dTMP. The protein operates within pyrimidine metabolism; dTTP biosynthesis. Catalyzes the reductive methylation of 2'-deoxyuridine-5'-monophosphate (dUMP) to 2'-deoxythymidine-5'-monophosphate (dTMP) while utilizing 5,10-methylenetetrahydrofolate (mTHF) as the methyl donor and reductant in the reaction, yielding dihydrofolate (DHF) as a by-product. This enzymatic reaction provides an intracellular de novo source of dTMP, an essential precursor for DNA biosynthesis. This Actinobacillus succinogenes (strain ATCC 55618 / DSM 22257 / CCUG 43843 / 130Z) protein is Thymidylate synthase.